The following is a 270-amino-acid chain: Protein-ADP-ribose hydrolase (270 aa).

One can recognise a Macro domain in the interval 73–267 (VSVKDCQKTN…LYDTYLQKEN (195 aa)). Residues D92, I93, and N106 each contribute to the ADP-D-ribose site. Zn(2+) contacts are provided by C112, H117, and C119. ADP-D-ribose-binding residues include C119, I120, D121, S212, T213, G214, E215, and F216.

The protein belongs to the MacroD-type family. Zn-Macro subfamily. Zn(2+) is required as a cofactor.

It catalyses the reaction 4-O-(ADP-D-ribosyl)-L-aspartyl-[protein] + H2O = L-aspartyl-[protein] + ADP-D-ribose + H(+). Functionally, ADP-ribosylhydrolase that specifically reverses the SirTM-mediated mono-ADP-ribosylation at an asparatate residue of GcvH-L, by releasing ADP-ribose from the target protein. May play a role in the regulation of the response to host-induced oxidative stress. This chain is Protein-ADP-ribose hydrolase, found in Streptococcus pyogenes serotype M3 (strain ATCC BAA-595 / MGAS315).